The sequence spans 758 residues: Catalase-peroxidase (758 aa).

Over residues 1–10 (MSDTQDNAPV) the composition is skewed to polar residues. Residues 1 to 57 (MSDTQDNAPVSAQGVDQKAAAGCPVAHDSVTAHGSESESPAIDSPSAVGGGRPRTNR) are disordered. The segment at residues 128 to 250 (WHAAGTYRIH…VGATEMGLIY (123 aa)) is a cross-link (tryptophyl-tyrosyl-methioninium (Trp-Tyr) (with M-276)). His-129 functions as the Proton acceptor in the catalytic mechanism. The segment at residues 250 to 276 (YVNPEGPRGNADPASAAHFIRETFRRM) is a cross-link (tryptophyl-tyrosyl-methioninium (Tyr-Met) (with W-128)). Heme b is bound at residue His-291.

This sequence belongs to the peroxidase family. Peroxidase/catalase subfamily. As to quaternary structure, homodimer or homotetramer. Heme b is required as a cofactor. Formation of the three residue Trp-Tyr-Met cross-link is important for the catalase, but not the peroxidase activity of the enzyme.

It carries out the reaction H2O2 + AH2 = A + 2 H2O. It catalyses the reaction 2 H2O2 = O2 + 2 H2O. In terms of biological role, bifunctional enzyme with both catalase and broad-spectrum peroxidase activity. This chain is Catalase-peroxidase, found in Salinispora tropica (strain ATCC BAA-916 / DSM 44818 / JCM 13857 / NBRC 105044 / CNB-440).